Consider the following 213-residue polypeptide: Putative manganese efflux pump MntP (213 aa).

Helical transmembrane passes span 3-23, 36-56, 67-87, 130-150, 152-172, and 187-207; these read ILSIVLTGFGLAMDAFAVSVA, ALKVALFFGGFQALMPLIGWG, AFDHWIAFILLGFIGGKMIFE, LAIATSIDALAVGVSFAFLGI, IVQTIIIIGIITFVLCFLGVI, and IVGGVILILIGINILLEHTGI.

This sequence belongs to the MntP (TC 9.B.29) family.

Its subcellular location is the cell membrane. Probably functions as a manganese efflux pump. This Clostridium perfringens (strain SM101 / Type A) protein is Putative manganese efflux pump MntP.